Here is a 43-residue protein sequence, read N- to C-terminus: Protein PsbN (43 aa).

The helical transmembrane segment at 7-27 (IAIFISGLLVSFTGYALYTAF) threads the bilayer.

It belongs to the PsbN family.

Its subcellular location is the plastid. It localises to the chloroplast thylakoid membrane. In terms of biological role, may play a role in photosystem I and II biogenesis. In Suaeda maritima (Annual sea blite), this protein is Protein PsbN.